A 283-amino-acid chain; its full sequence is 1-acyl-sn-glycerol-3-phosphate acyltransferase alpha (283 aa).

The signal sequence occupies residues 1-26 (MDLWPGAWMLLLLLFLLLLFLLPTLW). Residues 27–37 (FCSPSAKYFFK) lie on the Lumenal side of the membrane. Residues 38 to 58 (MAFYNGWILFLAVLAIPVCAV) traverse the membrane as a helical segment. Over 59 to 127 (RGRNVENMKI…PGRCVPIAKR (69 aa)) the chain is Cytoplasmic. Residues 104 to 109 (HQSSLD) carry the HXXXXD motif motif. Residues 128-148 (ELLWAGSAGLACWLAGVIFID) form a helical membrane-spanning segment. Over 149–283 (RKRTGDAISV…DYLKKPGGGG (135 aa)) the chain is Lumenal. An EGTR motif motif is present at residues 178 to 181 (EGTR).

Belongs to the 1-acyl-sn-glycerol-3-phosphate acyltransferase family. In terms of tissue distribution, widely expressed. Expressed in adipose tissue and at high levels in testis and pancreas. Expressed at lower levels in tissues such as heart, brain, placenta, kidney, lung, spleen, thymus, prostate, ovary, intestine, colon, leukocyte and liver.

Its subcellular location is the endoplasmic reticulum membrane. The enzyme catalyses a 1-acyl-sn-glycero-3-phosphate + an acyl-CoA = a 1,2-diacyl-sn-glycero-3-phosphate + CoA. It carries out the reaction 1-(9Z-octadecenoyl)-sn-glycero-3-phosphate + (9Z)-octadecenoyl-CoA = 1,2-di-(9Z-octadecenoyl)-sn-glycero-3-phosphate + CoA. The catalysed reaction is 1-(9Z-octadecenoyl)-sn-glycero-3-phosphate + hexadecanoyl-CoA = 1-(9Z)-octadecenoyl-2-hexadecanoyl-sn-glycero-3-phosphate + CoA. It catalyses the reaction heptadecanoyl-CoA + 1-(9Z-octadecenoyl)-sn-glycero-3-phosphate = 1-(9Z)-octadecenoyl-2-heptadecanoyl-sn-glycero-3-phosphate + CoA. The enzyme catalyses 1-(9Z-octadecenoyl)-sn-glycero-3-phosphate + octadecanoyl-CoA = 1-(9Z-octadecenoyl)-2-octadecanoyl-sn-glycero-3-phosphate + CoA. It carries out the reaction 1-(9Z-octadecenoyl)-sn-glycero-3-phosphate + (9Z,12Z)-octadecadienoyl-CoA = 1-(9Z)-octadecenoyl-2-(9Z,12Z)-octadecadienoyl-sn-glycero-3-phosphate + CoA. The catalysed reaction is 1-(9Z-octadecenoyl)-sn-glycero-3-phosphate + tetradecanoyl-CoA = 1-(9Z)-octadecenoyl-2-tetradecanoyl-sn-glycero-3-phosphate + CoA. It catalyses the reaction pentadecanoyl-CoA + 1-(9Z-octadecenoyl)-sn-glycero-3-phosphate = 1-(9Z)-octadecenoyl-2-pentadecanoyl-sn-glycero-3-phosphate + CoA. The enzyme catalyses 1-hexadecanoyl-sn-glycero-3-phosphate + (9Z)-octadecenoyl-CoA = 1-hexadecanoyl-2-(9Z-octadecenoyl)-sn-glycero-3-phosphate + CoA. It carries out the reaction 1-(9Z,12Z,15Z)-octadecatrienoyl-sn-glycero-3-phosphate + (9Z)-octadecenoyl-CoA = 1-(9Z,12Z,15Z)-octadecatrienoyl-2-(9Z)-octadecenoyl-sn-glycero-3-phosphate + CoA. The catalysed reaction is 1-(6Z,9Z,12Z-octadecatrienoyl)-sn-glycero-3-phosphate + (9Z)-octadecenoyl-CoA = (6Z,9Z,12Z)-octadecatrienoyl-2-(9Z)-octadecenoyl-sn-glycero-3-phosphate + CoA. It catalyses the reaction 1-eicosanoyl-sn-glycero-3-phosphate + (9Z)-octadecenoyl-CoA = 1-eicosanoyl-2-(9Z)-octadecenoyl-sn-glycero-3-phosphate + CoA. The enzyme catalyses 1-tetradecanoyl-sn-glycerol 3-phosphate + (9Z)-octadecenoyl-CoA = 1-tetradecanoyl-2-(9Z)-octadecenoyl-sn-glycero-3-phosphate + CoA. It carries out the reaction 1-(9Z-octadecenoyl)-sn-glycero-3-phosphate + (5Z,8Z,11Z,14Z)-eicosatetraenoyl-CoA = 1-(9Z)-octadecenoyl-2-(5Z,8Z,11Z,14Z)-eicosatetraenoyl-sn-glycero-3-phosphate + CoA. The catalysed reaction is 1-(9Z-octadecenoyl)-sn-glycero-3-phosphate + dodecanoyl-CoA = 1-(9Z)-octadecenoyl-2-dodecanoyl-sn-glycero-3-phosphate + CoA. It catalyses the reaction (6Z)-octadecenoyl-CoA + 1-(9Z-octadecenoyl)-sn-glycero-3-phosphate = 1-(9Z)-octadecenoyl-2-(6Z)-octadecenoyl-sn-glycero-3-phosphate + CoA. The enzyme catalyses (11Z)-octadecenoyl-CoA + 1-(9Z-octadecenoyl)-sn-glycero-3-phosphate = 1-(9Z)-octadecenoyl-2-(11Z)-octadecenoyl-sn-glycero-3-phosphate + CoA. It carries out the reaction (9Z)-hexadecenoyl-CoA + 1-(9Z-octadecenoyl)-sn-glycero-3-phosphate = 1-(9Z-octadecenoyl)-2-(9Z-hexadecenoyl)-sn-glycero-3-phosphate + CoA. The protein operates within phospholipid metabolism; CDP-diacylglycerol biosynthesis; CDP-diacylglycerol from sn-glycerol 3-phosphate: step 2/3. In terms of biological role, converts 1-acyl-sn-glycerol-3-phosphate (lysophosphatidic acid or LPA) into 1,2-diacyl-sn-glycerol-3-phosphate (phosphatidic acid or PA) by incorporating an acyl moiety at the sn-2 position of the glycerol backbone. The sequence is that of 1-acyl-sn-glycerol-3-phosphate acyltransferase alpha (AGPAT1) from Homo sapiens (Human).